A 281-amino-acid polypeptide reads, in one-letter code: MQQPFNYPYPQIYWVDSSASSPWAPPGTVLPCPTSVPRRPGQRRPPPPPPPPPLPPPPPPPPLPPLPLPPLKKRGNHSTGLCLLVMFFMVLVALVGLGLGMFQLFHLQKELAELRESTSQMHTASSLEKQIGHPSPPPEKKELRKVAHLTGKSNSRSMPLEWEDTYGIVLLSGVKYKKGGLVINETGLYFVYSKVYFRGQSCNNLPLSHKVYMRNSKYPQDLVMMEGKMMSYCTTGQMWARSSYLGAVFNLTSADHLYVNVSELSLVNFEESQTFFGLYKL.

The Cytoplasmic portion of the chain corresponds to 1–80 (MQQPFNYPYP…LKKRGNHSTG (80 aa)). Residues 20–71 (SSPWAPPGTVLPCPTSVPRRPGQRRPPPPPPPPPLPPPPPPPPLPPLPLPPL) are disordered. Residues 43 to 70 (RRPPPPPPPPPLPPPPPPPPLPPLPLPP) show a composition bias toward pro residues. A helical; Signal-anchor for type II membrane protein membrane pass occupies residues 81-102 (LCLLVMFFMVLVALVGLGLGMF). Residues 103 to 281 (QLFHLQKELA…SQTFFGLYKL (179 aa)) are Extracellular-facing. Over residues 118 to 128 (TSQMHTASSLE) the composition is skewed to polar residues. A disordered region spans residues 118 to 142 (TSQMHTASSLEKQIGHPSPPPEKKE). The region spanning 145-281 (KVAHLTGKSN…SQTFFGLYKL (137 aa)) is the THD domain. The N-linked (GlcNAc...) asparagine glycan is linked to Asn184. A disulfide bridge connects residues Cys202 and Cys233. Residues Asn250 and Asn260 are each glycosylated (N-linked (GlcNAc...) asparagine).

The protein belongs to the tumor necrosis factor family. Homotrimer. Interacts with ARHGAP9, BAIAP2L1, BTK, CACNB3, CACNB4, CRK, DLG2, DNMBP, DOCK4, EPS8L3, FGR, FYB1, FYN, HCK, ITK, ITSN2, KALRN, LYN, MACC1, MIA, MPP4, MYO15A, NCF1, NCK1, NCK2, NCKIPSD, OSTF1, PIK3R1, PSTPIP1, RIMBP3C, SAMSN1, SH3GL3, SH3PXD2B, SH3PXD2A, SH3RF2, SKAP2, SNX33, SNX9, SORBS3, SPTA1, SRC, SRGAP1, SRGAP2, SRGAP3, TEC, TJP3 and YES1. Post-translationally, the soluble form derives from the membrane form by proteolytic processing. The membrane-bound form undergoes two successive intramembrane proteolytic cleavages. The first one is processed by ADAM10 producing an N-terminal fragment, which lacks the receptor-binding extracellular domain. This ADAM10-processed FasL (FasL APL) remnant form is still membrane anchored and further processed by SPPL2A that liberates the FasL intracellular domain (FasL ICD). FasL shedding by ADAM10 is a prerequisite for subsequent intramembrane cleavage by SPPL2A in T-cells. In terms of processing, N-glycosylated. Glycosylation enhances apoptotic activity. Phosphorylated by FGR on tyrosine residues; this is required for ubiquitination and subsequent internalization. Post-translationally, monoubiquitinated.

The protein resides in the cell membrane. Its subcellular location is the cytoplasmic vesicle lumen. It is found in the lysosome lumen. The protein localises to the secreted. It localises to the nucleus. Cytokine that binds to TNFRSF6/FAS, a receptor that transduces the apoptotic signal into cells. Involved in cytotoxic T-cell-mediated apoptosis, natural killer cell-mediated apoptosis and in T-cell development. Initiates fratricidal/suicidal activation-induced cell death (AICD) in antigen-activated T-cells contributing to the termination of immune responses. TNFRSF6/FAS-mediated apoptosis also has a role in the induction of peripheral tolerance. Binds to TNFRSF6B/DcR3, a decoy receptor that blocks apoptosis. Its function is as follows. Induces FAS-mediated activation of NF-kappa-B, initiating non-apoptotic signaling pathways. Can induce apoptosis but does not appear to be essential for this process. In terms of biological role, cytoplasmic form induces gene transcription inhibition. The polypeptide is Tumor necrosis factor ligand superfamily member 6 (FASLG) (Homo sapiens (Human)).